We begin with the raw amino-acid sequence, 558 residues long: Urocanate hydratase (558 aa).

NAD(+)-binding positions include 53–54 (GG), Gln-131, 177–179 (GMG), Glu-197, Arg-202, 243–244 (NA), 264–268 (QTSAH), 274–275 (YL), and Tyr-323. Cys-411 is a catalytic residue. Gly-493 contacts NAD(+).

This sequence belongs to the urocanase family. The cofactor is NAD(+).

It is found in the cytoplasm. It carries out the reaction 4-imidazolone-5-propanoate = trans-urocanate + H2O. The protein operates within amino-acid degradation; L-histidine degradation into L-glutamate; N-formimidoyl-L-glutamate from L-histidine: step 2/3. Its function is as follows. Catalyzes the conversion of urocanate to 4-imidazolone-5-propionate. This Idiomarina loihiensis (strain ATCC BAA-735 / DSM 15497 / L2-TR) protein is Urocanate hydratase.